A 157-amino-acid chain; its full sequence is Small ribosomal subunit protein uS7 (157 aa).

It belongs to the universal ribosomal protein uS7 family. As to quaternary structure, part of the 30S ribosomal subunit. Contacts proteins S9 and S11.

In terms of biological role, one of the primary rRNA binding proteins, it binds directly to 16S rRNA where it nucleates assembly of the head domain of the 30S subunit. Is located at the subunit interface close to the decoding center, probably blocks exit of the E-site tRNA. The protein is Small ribosomal subunit protein uS7 of Borrelia turicatae (strain 91E135).